The following is a 140-amino-acid chain: MSRTIMAFDFGTKSIGSAIGQEITGTASPLKAFKANDGIPNWDEIEKQIKEWQPNLLVVGLPTDLHGKALETITPRAKKFAQRLQGRFGLPVELHDERLSTTEARSELFSMGGYKALSKGNVDCQSAVIILESWFEAQWG.

It belongs to the YqgF nuclease family.

The protein localises to the cytoplasm. Could be a nuclease involved in processing of the 5'-end of pre-16S rRNA. This is Putative pre-16S rRNA nuclease from Vibrio vulnificus (strain CMCP6).